The sequence spans 640 residues: 5-aminolevulinate synthase, non-specific, mitochondrial (640 aa).

The N-terminal 56 residues, 1-56 (METVVRSCPFLSRVPQAFLQKAGKSLLFYAQNCPKMMEVGAKPAPRALSTAAVHYQ), are a transit peptide targeting the mitochondrion. Disordered regions lie at residues 60–103 (ETPP…TSQG) and 143–163 (EVAETSGGPSVVSVKTDGGDP). Positions 75-92 (VQQTPDGSQQSPDGTQLP) are enriched in polar residues. Substrate is bound by residues Arg217, Ser334, and Lys353. Ser386, His414, and Thr442 together coordinate pyridoxal 5'-phosphate. Residue Lys445 is part of the active site. Lys445 carries the N6-(pyridoxal phosphate)lysine modification. Residues Thr474 and Thr475 each coordinate pyridoxal 5'-phosphate. Thr562 provides a ligand contact to substrate. Pro576 bears the Hydroxyproline mark.

The protein belongs to the class-II pyridoxal-phosphate-dependent aminotransferase family. Homodimer. Interacts (hydroxylated form) with VHL. Requires pyridoxal 5'-phosphate as cofactor. Post-translationally, in normoxia, is hydroxylated at Pro-576, promoting interaction with VHL, initiating ubiquitination and subsequent degradation via the proteasome. Ubiquitinated; in normoxia following hydroxylation and interaction with VHL, leading to its subsequent degradation via the proteasome.

It localises to the mitochondrion inner membrane. It carries out the reaction succinyl-CoA + glycine + H(+) = 5-aminolevulinate + CO2 + CoA. It functions in the pathway porphyrin-containing compound metabolism; protoporphyrin-IX biosynthesis; 5-aminolevulinate from glycine: step 1/1. Its function is as follows. Catalyzes the pyridoxal 5'-phosphate (PLP)-dependent condensation of succinyl-CoA and glycine to form aminolevulinic acid (ALA), with CoA and CO2 as by-products. The sequence is that of 5-aminolevulinate synthase, non-specific, mitochondrial (ALAS1) from Pongo abelii (Sumatran orangutan).